We begin with the raw amino-acid sequence, 285 residues long: VIGGDECNINESPFLAFLYSQLLSSRRYFCGMTLINQEWVLTAAHCNLYPDRKDMNWWLLIKLGKHSGSTRRWVANYDEQVRYWPKEKFIWWYCPNKKKDVINNYVWVWWDKDILLWELWMLIRLNRPVKYSEHIAPLSLPSSPPSAKWWHVGSVCRIMGWGQITETWWNSEDTLPDVPRCANINLFNYEVCRAYNQRWWRGLPAKTLCAGDLEGIIRGGWDTCVGDSGGPLICDGQYQGIAYWGSKPCAEPDEPAAYSKVFDHLDWSQSVIAGGTWWRGDDTCP.

Residues 1-273 (VIGGDECNIN…HLDWSQSVIA (273 aa)) form the Peptidase S1 domain. Disulfide bonds link cysteine 7/cysteine 181, cysteine 30/cysteine 46, cysteine 94/cysteine 284, cysteine 156/cysteine 234, cysteine 192/cysteine 209, and cysteine 224/cysteine 249. Catalysis depends on charge relay system residues histidine 45 and aspartate 113. Serine 228 acts as the Charge relay system in catalysis.

Belongs to the peptidase S1 family. Snake venom subfamily. In terms of assembly, monomer. In terms of processing, homologous thrombin-like enzymes are N-glycosylated. This enzyme does not contain the consensus glycosylation sites, suggesting it is not glycosylated. As to expression, expressed by the venom gland.

The protein resides in the secreted. With respect to regulation, inhibited by PMSF, disodium-EDTA, S(Dm) and soybean trypsin inhibitor (SBTI). SBTI and S(Dm) (the anti-hemorrhagic protein) acts as a non-competitive inhibitors that decrease the enzymatic activity. In terms of biological role, thrombin-like enzyme that induces the formation of fibrin clot. Cleaves the Aalpha-chain of fibrinogen (FGA) with higher activity than the Bbeta-chain (FGB). Induces platelet aggregation in both platelet-rich plasma and in washed platelet preparations. This aggregation is strongly inhibited by preincubation of the enzyme with PMSF. This chain is Thrombin-like enzyme TLBm, found in Bothrops marajoensis (Marajo lancehead).